A 254-amino-acid chain; its full sequence is CDP-diacylglycerol pyrophosphatase (254 aa).

The chain crosses the membrane as a helical span at residues 6–26 (YFLLALLVAILAALAGGYYWL).

Belongs to the Cdh family.

It localises to the cell inner membrane. It carries out the reaction a CDP-1,2-diacyl-sn-glycerol + H2O = a 1,2-diacyl-sn-glycero-3-phosphate + CMP + 2 H(+). The protein operates within phospholipid metabolism; CDP-diacylglycerol degradation; phosphatidate from CDP-diacylglycerol: step 1/1. In Klebsiella pneumoniae (strain 342), this protein is CDP-diacylglycerol pyrophosphatase.